Here is a 249-residue protein sequence, read N- to C-terminus: MLNLFQIMNMINNDVPTPYGFYFQDSATPNQEGILELHDNIMFYLVVILGLVSWMLFTIVRTYSRNPMAYKYIKHGQTIEIIWKIFPAVILLTIAFPSFILLYLCDEVISPAMTIKAIGYQWYWKYEYFDFINDNGETIEFESYVIPDSLLEEGQLRLLDTDTSIVVPVDTHIRFIVTAADVIHDFAIPSLGIKVDGTPGRLNQVSTLIQREGVFYGMCSELCGIGHAQMPIKVEAVSLPKFLEWLNEQ.

An N-terminal signal peptide occupies residues 1–13 (MLNLFQIMNMINN). The Mitochondrial intermembrane segment spans residues 14–40 (DVPTPYGFYFQDSATPNQEGILELHDN). Residues 41 to 62 (IMFYLVVILGLVSWMLFTIVRT) form a helical membrane-spanning segment. The Mitochondrial matrix segment spans residues 63–80 (YSRNPMAYKYIKHGQTIE). The helical transmembrane segment at 81–105 (IIWKIFPAVILLTIAFPSFILLYLC) threads the bilayer. Over 106 to 249 (DEVISPAMTI…PKFLEWLNEQ (144 aa)) the chain is Mitochondrial intermembrane. Residues His-184, Cys-219, Glu-221, Cys-223, His-227, and Met-230 each contribute to the Cu cation site. Glu-221 serves as a coordination point for Mg(2+).

The protein belongs to the cytochrome c oxidase subunit 2 family. Component of the cytochrome c oxidase (complex IV, CIV), a multisubunit enzyme composed of a catalytic core of 3 subunits and several supernumerary subunits. The complex exists as a monomer or a dimer and forms supercomplexes (SCs) in the inner mitochondrial membrane with ubiquinol-cytochrome c oxidoreductase (cytochrome b-c1 complex, complex III, CIII). The cofactor is Cu cation. The signal sequence of COX2 is processed by IMP1.

The protein resides in the mitochondrion inner membrane. The catalysed reaction is 4 Fe(II)-[cytochrome c] + O2 + 8 H(+)(in) = 4 Fe(III)-[cytochrome c] + 2 H2O + 4 H(+)(out). Its function is as follows. Component of the cytochrome c oxidase, the last enzyme in the mitochondrial electron transport chain which drives oxidative phosphorylation. The respiratory chain contains 3 multisubunit complexes succinate dehydrogenase (complex II, CII), ubiquinol-cytochrome c oxidoreductase (cytochrome b-c1 complex, complex III, CIII) and cytochrome c oxidase (complex IV, CIV), that cooperate to transfer electrons derived from NADH and succinate to molecular oxygen, creating an electrochemical gradient over the inner membrane that drives transmembrane transport and the ATP synthase. Cytochrome c oxidase is the component of the respiratory chain that catalyzes the reduction of oxygen to water. Electrons originating from reduced cytochrome c in the intermembrane space (IMS) are transferred via the dinuclear copper A center (CU(A)) of subunit 2 and heme A of subunit 1 to the active site in subunit 1, a binuclear center (BNC) formed by heme A3 and copper B (CU(B)). The BNC reduces molecular oxygen to 2 water molecules using 4 electrons from cytochrome c in the IMS and 4 protons from the mitochondrial matrix. The protein is Cytochrome c oxidase subunit 2 (COX2) of Maudiozyma exigua (Yeast).